The following is a 321-amino-acid chain: uncharacterized protein (321 aa).

The next 9 membrane-spanning stretches (helical) occupy residues I12–T32, L52–V72, I86–I106, L109–F129, F136–A156, D168–G188, W214–L234, K254–F274, and I292–A312.

The protein localises to the cell membrane. This is an uncharacterized protein from Campylobacter jejuni subsp. jejuni serotype O:2 (strain ATCC 700819 / NCTC 11168).